We begin with the raw amino-acid sequence, 632 residues long: Dihydrolipoyllysine-residue acetyltransferase component of pyruvate dehydrogenase complex, mitochondrial (632 aa).

Residues 1-77 constitute a mitochondrion transit peptide; the sequence is MWRVCARRVQ…LLGSPSRRSY (77 aa). Lipoyl-binding domains lie at 82–158 and 208–284; these read HQKV…CITV and HMQI…CIIV. S91 is modified (phosphoserine). K123 and K249 each carry N6-lipoyllysine. The region spanning 342–379 is the Peripheral subunit-binding (PSBD) domain; it reads FVSPLAKKLAAEKGIDLTQVKGTGPEGRIIKKDIDSFV. R446 serves as a coordination point for CoA. Residue K451 is modified to N6-acetyllysine. K458 is modified (N6-succinyllysine). Residue S460 participates in CoA binding. At K532 the chain carries N6-succinyllysine. Residues S551, N552, and G576 each coordinate CoA. Catalysis depends on residues H605 and D609.

The protein belongs to the 2-oxoacid dehydrogenase family. Part of the pyruvate dehydrogenase complex (PDHc) that is a multi-enzyme complex composed of multiple copies of three enzymes, pyruvate dehydrogenase (subunits PDH1A and PDHB, E1 component), dihydrolipoamide acetyltransferase (DLAT, E2 component), and dihydrolipoamide dehydrogenase (DLD, E3 component) to which is added an additional protein the E3-binding protein (PDHX, E3BP). In terms of structural architecture, the E2 and E3BP components assemble into a 60meric central core with icosahedral symmetry. The central core is decorated with E1 and E3 proteins. Currently, two alternative models for the E2:E3BP stoichiometry are considered as being either 48:12 (E2(48)-E3BP(12)) or 40:20 (E2(40)-E3BP(20)). Interacts with PDK2 and PDK3. Interacts with SIRT4. Interacts with PDHB. (R)-lipoate is required as a cofactor. Post-translationally, delipoylated at Lys-123 and Lys-249 by SIRT4, delipoylation decreases the PHD complex activity. As to expression, expressed in flagella of epididymal sperm.

The protein resides in the mitochondrion matrix. The catalysed reaction is N(6)-[(R)-dihydrolipoyl]-L-lysyl-[protein] + acetyl-CoA = N(6)-[(R)-S(8)-acetyldihydrolipoyl]-L-lysyl-[protein] + CoA. In terms of biological role, as part of the pyruvate dehydrogenase complex, catalyzes the transfers of an acetyl group to a lipoic acid moiety. The pyruvate dehydrogenase complex, catalyzes the overall conversion of pyruvate to acetyl-CoA and CO(2), and thereby links cytoplasmic glycolysis and the mitochondrial tricarboxylic acid (TCA) cycle. This chain is Dihydrolipoyllysine-residue acetyltransferase component of pyruvate dehydrogenase complex, mitochondrial, found in Rattus norvegicus (Rat).